Here is a 1256-residue protein sequence, read N- to C-terminus: Splicing factor, arginine/serine-rich 19 (1256 aa).

Disordered regions lie at residues 1 to 33, 158 to 343, 371 to 395, 408 to 1030, 1112 to 1152, and 1221 to 1256; these read MEEE…SPSA, GKTV…APRR, ALSL…PEEE, PRQP…TLPP, GSLP…DKYL, and FRKH…LPPL. Residues 7 to 27 are compositionally biased toward basic and acidic residues; it reads SRGKTEESGEDRGDGPPDRDP. A compositionally biased stretch (low complexity) spans 192-206; sequence SSASSSPSPSPSSSS. Residues 207–222 show a composition bias toward pro residues; that stretch reads PSPPPPPPPPPPPALP. Residues 227–236 show a composition bias toward basic and acidic residues; it reads DIYDPFHPTD. Phosphoserine is present on serine 240. Over residues 255 to 265 the composition is skewed to polar residues; the sequence is TGSNPSSSAGT. A compositionally biased stretch (acidic residues) spans 268 to 282; that stretch reads PEEEEEEEEEEEEEG. Threonine 328 is subject to Phosphothreonine. Positions 382–393 are enriched in acidic residues; sequence PEIEEGEIVQPE. Residues 412–424 show a composition bias toward low complexity; the sequence is PASVATLASVAAP. 2 positions are modified to phosphoserine: serine 442 and serine 447. Residues 478–489 are compositionally biased toward basic residues; the sequence is KILTQRRERYRQ. A phosphoserine mark is found at serine 491, serine 493, serine 510, serine 518, and serine 520. Composition is skewed to basic residues over residues 538 to 553 and 560 to 577; these read TARR…RSRS and RGGH…RRRS. A phosphoserine mark is found at serine 577 and serine 579. The span at 592-611 shows a compositional bias: basic residues; it reads RERHRGKRREGGKKKKKRSR. Residues 612–623 are compositionally biased toward basic and acidic residues; it reads SRAEKRSGDLEK. At threonine 663 the chain carries Phosphothreonine. 2 positions are modified to phosphoserine: serine 676 and serine 682. Residue tyrosine 689 is modified to Phosphotyrosine. Phosphoserine is present on residues serine 691 and serine 695. Basic and acidic residues-rich tracts occupy residues 696–709 and 719–741; these read ADER…DRRR and SREK…DRSS. 2 stretches are compositionally biased toward low complexity: residues 752 to 775 and 793 to 804; these read PGSG…SCSS and SSTTPAKDSSSS. Residue lysine 812 forms a Glycyl lysine isopeptide (Lys-Gly) (interchain with G-Cter in SUMO2) linkage. Positions 813–831 are enriched in basic and acidic residues; that stretch reads FSRDRESRSPFLKPDERAP. Residues serine 819 and serine 821 each carry the phosphoserine modification. Residues 843-875 are compositionally biased toward basic residues; the sequence is KPKKTKAKAKAGAKKAKGTKGKTKPSKTRKKVR. A phosphoserine mark is found at serine 876, serine 883, serine 910, and serine 912. Residues 922 to 935 show a composition bias toward pro residues; the sequence is STPPPKVAPPPPAL. Residues threonine 923 and threonine 936 each carry the phosphothreonine modification. The span at 938-947 shows a compositional bias: polar residues; the sequence is DSQTVDSSCK. A Phosphoserine modification is found at serine 939. Threonine 948 carries the post-translational modification Phosphothreonine. A compositionally biased stretch (acidic residues) spans 969–984; that stretch reads EEEEEEEEEEEEEEEQ. Over residues 985–1017 the composition is skewed to low complexity; that stretch reads QPATTTATSTAAAAPSTAPSAGSTAGDSGAEDG. Residues 1131–1256 form a necessary for interaction with the CTD domain of POLR2A region; it reads PASDKREGSS…GGPGLPLPPL (126 aa). Over residues 1133–1152 the composition is skewed to basic and acidic residues; that stretch reads SDKREGSSSSEGRGDTDKYL. Residues 1244-1256 are compositionally biased toward pro residues; it reads PDKGGPGLPLPPL.

Belongs to the splicing factor SR family. As to quaternary structure, interacts with POLR2A.

It is found in the nucleus. May function in pre-mRNA splicing. The polypeptide is Splicing factor, arginine/serine-rich 19 (Scaf1) (Mus musculus (Mouse)).